The primary structure comprises 184 residues: Photosystem I assembly protein Ycf4 (184 aa).

A run of 2 helical transmembrane segments spans residues 21-43 (NFCWAFILFLGSSGFLLVGISSY) and 63-85 (GLVMSFYGIAGLFISAYLWCAIS).

It belongs to the Ycf4 family.

Its subcellular location is the plastid. The protein resides in the chloroplast thylakoid membrane. In terms of biological role, seems to be required for the assembly of the photosystem I complex. This Spinacia oleracea (Spinach) protein is Photosystem I assembly protein Ycf4.